The sequence spans 316 residues: L-lactate dehydrogenase 3 (316 aa).

Residues valine 16, aspartate 37, arginine 42, and tyrosine 68 each contribute to the NAD(+) site. Arginine 91 is a substrate binding site. Residues serine 104, 121–123 (ASN), and threonine 146 each bind NAD(+). Substrate is bound at residue 123 to 126 (NPVD). 151-154 (DSSR) provides a ligand contact to substrate. Arginine 156 and histidine 171 together coordinate beta-D-fructose 1,6-bisphosphate. Residue histidine 178 is the Proton acceptor of the active site. Threonine 233 is a substrate binding site.

Belongs to the LDH/MDH superfamily. LDH family. In terms of assembly, homotetramer.

The protein resides in the cytoplasm. It carries out the reaction (S)-lactate + NAD(+) = pyruvate + NADH + H(+). It participates in fermentation; pyruvate fermentation to lactate; (S)-lactate from pyruvate: step 1/1. Allosterically activated by fructose 1,6-bisphosphate (FBP). Its function is as follows. Catalyzes the conversion of lactate to pyruvate. The polypeptide is L-lactate dehydrogenase 3 (Bacillus cereus (strain ATCC 10987 / NRS 248)).